Consider the following 543-residue polypeptide: Oxalate--CoA ligase (543 aa).

196–207 is an ATP binding site; the sequence is HTSGTTSTPKTV. The FACS signature appears at 410 to 458; sequence ENYFRTGDQGYFDPEGFLVLTGRIKELINRGGEKISPIELDGIMLSHPK. The C-terminal peroxisome targeting signal (PTS1) motif lies at 541-543; it reads SKL.

It belongs to the ATP-dependent AMP-binding enzyme family. In terms of assembly, interacts with PEX5.

The protein resides in the peroxisome matrix. It localises to the peroxisome membrane. It catalyses the reaction oxalate + ATP + CoA = oxalyl-CoA + AMP + diphosphate. Functionally, catalyzes the first step in a degradation pathway of oxalate to CO(2) to protect the cell against the harmful effects of oxalate derived from endogenous processes or an environmental sources. The chain is Oxalate--CoA ligase from Saccharomyces cerevisiae (strain ATCC 204508 / S288c) (Baker's yeast).